Here is a 251-residue protein sequence, read N- to C-terminus: Methionine aminopeptidase (251 aa).

Histidine 76 lines the substrate pocket. A divalent metal cation-binding residues include aspartate 93, aspartate 104, and histidine 168. Position 175 (histidine 175) interacts with substrate. The a divalent metal cation site is built by glutamate 202 and glutamate 233.

The protein belongs to the peptidase M24A family. Methionine aminopeptidase type 1 subfamily. In terms of assembly, monomer. The cofactor is Co(2+). It depends on Zn(2+) as a cofactor. Mn(2+) serves as cofactor. Requires Fe(2+) as cofactor.

It carries out the reaction Release of N-terminal amino acids, preferentially methionine, from peptides and arylamides.. Removes the N-terminal methionine from nascent proteins. The N-terminal methionine is often cleaved when the second residue in the primary sequence is small and uncharged (Met-Ala-, Cys, Gly, Pro, Ser, Thr, or Val). Requires deformylation of the N(alpha)-formylated initiator methionine before it can be hydrolyzed. The polypeptide is Methionine aminopeptidase (Staphylococcus epidermidis (strain ATCC 35984 / DSM 28319 / BCRC 17069 / CCUG 31568 / BM 3577 / RP62A)).